We begin with the raw amino-acid sequence, 263 residues long: Small ribosomal subunit protein uS2 (263 aa).

Basic and acidic residues predominate over residues K223–L249. The disordered stretch occupies residues K223–E263. Residues D250–E263 show a composition bias toward acidic residues.

The protein belongs to the universal ribosomal protein uS2 family.

This chain is Small ribosomal subunit protein uS2, found in Campylobacter jejuni subsp. jejuni serotype O:6 (strain 81116 / NCTC 11828).